Consider the following 203-residue polypeptide: Histidine biosynthesis bifunctional protein HisIE (203 aa).

Positions 1–114 are phosphoribosyl-AMP cyclohydrolase; it reads MLTEQQRREL…FGNTAHQWLF (114 aa). A phosphoribosyl-ATP pyrophosphohydrolase region spans residues 115–203; sequence LYQLEQLLAE…VIENLHKRHQ (89 aa).

In the N-terminal section; belongs to the PRA-CH family. The protein in the C-terminal section; belongs to the PRA-PH family.

It localises to the cytoplasm. The enzyme catalyses 1-(5-phospho-beta-D-ribosyl)-ATP + H2O = 1-(5-phospho-beta-D-ribosyl)-5'-AMP + diphosphate + H(+). It carries out the reaction 1-(5-phospho-beta-D-ribosyl)-5'-AMP + H2O = 1-(5-phospho-beta-D-ribosyl)-5-[(5-phospho-beta-D-ribosylamino)methylideneamino]imidazole-4-carboxamide. It participates in amino-acid biosynthesis; L-histidine biosynthesis; L-histidine from 5-phospho-alpha-D-ribose 1-diphosphate: step 2/9. The protein operates within amino-acid biosynthesis; L-histidine biosynthesis; L-histidine from 5-phospho-alpha-D-ribose 1-diphosphate: step 3/9. This chain is Histidine biosynthesis bifunctional protein HisIE (hisI), found in Shigella flexneri.